The primary structure comprises 94 residues: Signal peptidase complex subunit 1 (94 aa).

The residue at position 2 (S2) is an N-acetylserine. The Cytoplasmic portion of the chain corresponds to 2–28; sequence SEILQDVQRKLVFPIDFPSQRKTEKFQ. The chain crosses the membrane as a helical span at residues 29-49; the sequence is QLSLMIGALVACILGFAQQSL. A topological domain (lumenal) is located at residue K50. A helical transmembrane segment spans residues 51 to 71; it reads VLLTAYGISCVITLICVLPAY. The Cytoplasmic portion of the chain corresponds to 72-94; it reads PWYNKQKLRWAQPKIEINVDQYD.

The protein belongs to the SPCS1 family. As to quaternary structure, component of the signal peptidase complex (SPC) composed of a catalytic subunit SEC11 and three accessory subunits SPC1, SPC2 and SPC3. The complex induces a local thinning of the ER membrane which is used to measure the length of the signal peptide (SP) h-region of protein substrates. This ensures the selectivity of the complex towards h-regions shorter than 18-20 amino acids. SPC associates with the translocon complex. Interacts with SBH1 and SEB2/SBH2.

It localises to the endoplasmic reticulum membrane. Component of the signal peptidase complex (SPC) which catalyzes the cleavage of N-terminal signal sequences from nascent proteins as they are translocated into the lumen of the endoplasmic reticulum. Dispensable for SPC enzymatic activity. This Saccharomyces cerevisiae (strain ATCC 204508 / S288c) (Baker's yeast) protein is Signal peptidase complex subunit 1 (SPC1).